Here is a 273-residue protein sequence, read N- to C-terminus: Embryonic polyadenylate-binding protein 2 (273 aa).

The interval 22-57 (SSDPEAQGWGAWGRTEKTSLVPRAGSRAGSDKEAEE) is disordered. In terms of domain architecture, RRM spans 143–220 (RSVFVGNVDY…RVIKVLPKRT (78 aa)).

The protein localises to the cytoplasm. Its function is as follows. Binds the poly(A) tail of mRNA. The chain is Embryonic polyadenylate-binding protein 2 (Pabpn1l) from Mus musculus (Mouse).